The sequence spans 349 residues: uncharacterized protein (349 aa).

The N-terminal stretch at 1 to 25 is a signal peptide; that stretch reads MNKYIKQGAPILGILLAVMFGGREG.

Belongs to the bacterial solute-binding protein 1 family. WtpA subfamily.

This is an uncharacterized protein from Methanococcus aeolicus (strain ATCC BAA-1280 / DSM 17508 / OCM 812 / Nankai-3).